A 282-amino-acid polypeptide reads, in one-letter code: Bis(5'-nucleosyl)-tetraphosphatase, symmetrical (282 aa).

The protein belongs to the Ap4A hydrolase family.

The catalysed reaction is P(1),P(4)-bis(5'-adenosyl) tetraphosphate + H2O = 2 ADP + 2 H(+). Hydrolyzes diadenosine 5',5'''-P1,P4-tetraphosphate to yield ADP. In Escherichia coli O127:H6 (strain E2348/69 / EPEC), this protein is Bis(5'-nucleosyl)-tetraphosphatase, symmetrical.